Here is a 397-residue protein sequence, read N- to C-terminus: 2-acyl-1-lysophosphatidylinositol acyltransferase (397 aa).

The short motif at 112–117 (HQIYTD) is the HXXXXD motif element.

The protein belongs to the 1-acyl-sn-glycerol-3-phosphate acyltransferase family.

It localises to the lipid droplet. It catalyses the reaction 1-heptadecanoyl-sn-glycero-3-phosphate + octadecanoyl-CoA = 1-heptadecanoyl-2-octadecanoyl-sn-glycero-3-phosphate + CoA. The catalysed reaction is 1-heptadecanoyl-sn-glycero-3-phosphate + tetradecanoyl-CoA = 1-heptadecanoyl-2-tetradecanoyl-sn-glycero-3-phosphate + CoA. The enzyme catalyses 1-heptadecanoyl-sn-glycero-3-phosphate + hexadecanoyl-CoA = 1-heptadecanoyl-2-hexadecanoyl-sn-glycero-3-phosphate + CoA. Acyltransferase with lysophosphatidic acid acyltransferase (LPAAT) activity. Fatty acyl substrates include 18:0-acyl-CoA, 16:0-acyl-CoA, 17:0-acyl-CoA and 14:0-acyl-CoA. Responsible for the acyl-CoA-dependent introduction of saturated very long chain fatty acids (VLCFAs) into phosphatidylinositol, transferring saturated FAs with 18 to 26 carbon atoms. Responsible for the incorporation of stearate into phosphatidylinositol. Overexpression has an effect on chromosome stability. Regulates phosphorylation and expression of glycerol-3-phosphate acyltransferase SCT1. This is 2-acyl-1-lysophosphatidylinositol acyltransferase from Saccharomyces cerevisiae (strain ATCC 204508 / S288c) (Baker's yeast).